A 301-amino-acid chain; its full sequence is NADH-cytochrome b5 reductase 3 (301 aa).

G2 carries N-myristoyl glycine lipidation. The FAD-binding FR-type domain occupies 40-152 (DIKYSLRLID…RGPNGLLVYQ (113 aa)). K42 bears the N6-acetyllysine mark. Y43 is modified (phosphotyrosine). Residues R92, P93, Y94, V109, K111, and F114 each coordinate FAD. Position 120 is an N6-acetyllysine (K120). 4 residues coordinate FAD: K126, M127, S128, and T185.

Belongs to the flavoprotein pyridine nucleotide cytochrome reductase family. As to quaternary structure, component of a complex composed of cytochrome b5, NADH-cytochrome b5 reductase (CYB5R3) and MTARC2. Interacts with MTLN; the interaction is required to maintain cellular lipid composition and leads to stimulation of mitochondrial respiratory complex I activity. Requires FAD as cofactor.

The protein localises to the endoplasmic reticulum membrane. It is found in the mitochondrion outer membrane. The catalysed reaction is 2 Fe(III)-[cytochrome b5] + NADH = 2 Fe(II)-[cytochrome b5] + NAD(+) + H(+). Its function is as follows. Catalyzes the reduction of two molecules of cytochrome b5 using NADH as the electron donor. The sequence is that of NADH-cytochrome b5 reductase 3 (CYB5R3) from Macaca fascicularis (Crab-eating macaque).